A 622-amino-acid polypeptide reads, in one-letter code: Low affinity potassium transport system protein Kup (622 aa).

Helical transmembrane passes span 9–29 (LPAITLAAIGVVYGDIGTSPL), 49–69 (VFGFLSLIFWLLIFVVSIKYL), 103–123 (VIMGLIGGSFFYGEVVITPAI), 137–157 (PQLDTWIVPLSIIVLTLLFMI), 165–185 (VGKLFAPIMLTWFLILAGLGL), 213–233 (VSFIALGAVVLSITGGEALYA), 247–267 (WFTVVLPSLTLNYFGQGALLL), 276–296 (PFFLLAPDWALIPLLIIAALA), 337–357 (IYIPFVNWMLYVAVVIVIVSF), 363–383 (LAAAYGIAVTGTMVLTSILST), 396–416 (FVALILIAFLCVDIPLFTANL), and 419–439 (LLSGGWLPLSLGTVMFIVMTT).

It belongs to the HAK/KUP transporter (TC 2.A.72) family.

Its subcellular location is the cell inner membrane. It carries out the reaction K(+)(in) + H(+)(in) = K(+)(out) + H(+)(out). Its function is as follows. Responsible for the low-affinity transport of potassium into the cell. Likely operates as a K(+):H(+) symporter. The protein is Low affinity potassium transport system protein Kup of Shigella flexneri serotype 5b (strain 8401).